The following is a 281-amino-acid chain: NADH-quinone oxidoreductase subunit B (281 aa).

[4Fe-4S] cluster is bound by residues C37, C38, C103, and C132. Residues 242–281 (DAKPLDESRAHGPGPTTADIADAADTADSDAAPGATHDTP) form a disordered region. The segment covering 257–281 (TTADIADAADTADSDAAPGATHDTP) has biased composition (low complexity).

This sequence belongs to the complex I 20 kDa subunit family. In terms of assembly, NDH-1 is composed of 14 different subunits. Subunits NuoB, C, D, E, F, and G constitute the peripheral sector of the complex. [4Fe-4S] cluster serves as cofactor.

It is found in the cell membrane. The catalysed reaction is a quinone + NADH + 5 H(+)(in) = a quinol + NAD(+) + 4 H(+)(out). Its function is as follows. NDH-1 shuttles electrons from NADH, via FMN and iron-sulfur (Fe-S) centers, to quinones in the respiratory chain. The immediate electron acceptor for the enzyme in this species is believed to be a menaquinone. Couples the redox reaction to proton translocation (for every two electrons transferred, four hydrogen ions are translocated across the cytoplasmic membrane), and thus conserves the redox energy in a proton gradient. In Frankia alni (strain DSM 45986 / CECT 9034 / ACN14a), this protein is NADH-quinone oxidoreductase subunit B.